We begin with the raw amino-acid sequence, 142 residues long: Probable transport accessory protein MmpS1 (142 aa).

The next 2 membrane-spanning stretches (helical) occupy residues 8–28 (FWIP…VSRL) and 81–101 (VVNA…AVVA).

This sequence belongs to the MmpS family.

It is found in the cell membrane. In Mycobacterium bovis (strain ATCC BAA-935 / AF2122/97), this protein is Probable transport accessory protein MmpS1 (mmpS1).